Here is a 150-residue protein sequence, read N- to C-terminus: Nucleoside diphosphate kinase (150 aa).

ATP is bound by residues Lys-9, Phe-57, Arg-85, Thr-91, Arg-102, and Asn-112. The active-site Pros-phosphohistidine intermediate is His-115.

Belongs to the NDK family. As to quaternary structure, homotetramer. It depends on Mg(2+) as a cofactor.

It is found in the cytoplasm. The catalysed reaction is a 2'-deoxyribonucleoside 5'-diphosphate + ATP = a 2'-deoxyribonucleoside 5'-triphosphate + ADP. The enzyme catalyses a ribonucleoside 5'-diphosphate + ATP = a ribonucleoside 5'-triphosphate + ADP. In terms of biological role, major role in the synthesis of nucleoside triphosphates other than ATP. The ATP gamma phosphate is transferred to the NDP beta phosphate via a ping-pong mechanism, using a phosphorylated active-site intermediate. This chain is Nucleoside diphosphate kinase, found in Staphylococcus carnosus (strain TM300).